A 712-amino-acid polypeptide reads, in one-letter code: Dynamin-1-like protein drp-1 (712 aa).

The region spanning 24–304 (QIQLPQIVVV…LMHHIRNCLP (281 aa)) is the Dynamin-type G domain. The interval 34–41 (GSQSAGKS) is G1 motif. The interval 60–62 (VTR) is G2 motif. Residues 148–151 (DLPG) form a G3 motif region. The segment at 217–220 (TKLD) is G4 motif. The G5 motif stretch occupies residues 247 to 250 (VNRS). An interaction with caspase ced-9 region spans residues 280 to 502 (SRNGTPYLAK…LAYINTKHPE (223 aa)). Positions 523–542 (GRSRNRHASTGERAVSAHGE) are disordered. The GED domain maps to 620 to 711 (VAIIERLIRN…IISEVRETQV (92 aa)).

The protein belongs to the TRAFAC class dynamin-like GTPase superfamily. Dynamin/Fzo/YdjA family. Interacts (via residues 280-502) with caspase ced-9; the interaction is enhanced by GTP rather than GDP; the interaction is probably direct and may occur at the mitochondrion. In terms of tissue distribution, highly expressed in neurons, in intestinal cells and in the body wall, pharyngeal, and vulval muscles.

Its subcellular location is the mitochondrion. The protein localises to the mitochondrion outer membrane. It is found in the cytoplasm. It localises to the cytosol. It catalyses the reaction GTP + H2O = GDP + phosphate + H(+). With respect to regulation, GTPase activity is increased by binding to phospholipid membranes. Its function is as follows. Functions in mitochondrial division. Functions in peroxisomal division. Mediates membrane fission, perhaps mainly of the mitochondrial outer membrane. Mitochondrial fission may be promoted by recruitment to mitochondrial membranes via the egl-1/ced-9 complex. Involved in the coordination of mitochondrial division with autophagy in response to acute heat stress during larval development. Plays a role in apoptosis by promoting mitochondrial elimination and cell-death execution, acting downstream of caspase ced-3, and perhaps independently of FIS1-related protein fis-2, caspase ced-9 and apoptosis-inducing factor AIFM/wah-1. Role in promoting apoptosis dependent upon cleavage of drp-1 by ced-3. Involved in negatively modulating longevity in concert with the Insulin/IGF-1-like signaling (IIS) mediated pathway. This Caenorhabditis elegans protein is Dynamin-1-like protein drp-1.